The following is a 423-amino-acid chain: Tyrosine--tRNA ligase (423 aa).

Y35 contacts L-tyrosine. A 'HIGH' region motif is present at residues 40-49 (PTAASLHVGH). Y170 and Q174 together coordinate L-tyrosine. The 'KMSKS' region signature appears at 231–235 (KFGKS). Residue K234 coordinates ATP. The region spanning 353–419 (GPLVDLLVEV…GKKNLAAVEV (67 aa)) is the S4 RNA-binding domain.

This sequence belongs to the class-I aminoacyl-tRNA synthetase family. TyrS type 1 subfamily. In terms of assembly, homodimer.

The protein resides in the cytoplasm. The catalysed reaction is tRNA(Tyr) + L-tyrosine + ATP = L-tyrosyl-tRNA(Tyr) + AMP + diphosphate + H(+). Its function is as follows. Catalyzes the attachment of tyrosine to tRNA(Tyr) in a two-step reaction: tyrosine is first activated by ATP to form Tyr-AMP and then transferred to the acceptor end of tRNA(Tyr). The sequence is that of Tyrosine--tRNA ligase from Streptomyces griseus subsp. griseus (strain JCM 4626 / CBS 651.72 / NBRC 13350 / KCC S-0626 / ISP 5235).